We begin with the raw amino-acid sequence, 511 residues long: Putative polyol transporter 2 (511 aa).

Transmembrane regions (helical) follow at residues 25 to 45 (FAFA…YDIG), 63 to 83 (VQLE…SGAA), 94 to 114 (YTIV…GFAT), 117 to 137 (PFIM…MMIA), 156 to 176 (FPEI…YFFA), 186 to 206 (FMLG…LAMP), 284 to 304 (ILIA…DAVV), 324 to 344 (LATV…TCLV), 351 to 371 (ALLL…GTSL), 384 to 404 (WAIG…SLGA), 424 to 444 (GASL…MTFL), and 454 to 474 (GAFL…FTFL).

The protein belongs to the major facilitator superfamily. Sugar transporter (TC 2.A.1.1) family.

Its subcellular location is the membrane. Its function is as follows. Plasma membrane sugar-proton symporter. The polypeptide is Putative polyol transporter 2 (PLT2) (Arabidopsis thaliana (Mouse-ear cress)).